The sequence spans 262 residues: Phosphatidylserine decarboxylase proenzyme (262 aa).

Catalysis depends on charge relay system; for autoendoproteolytic cleavage activity residues D86, H142, and S226. Catalysis depends on S226, which acts as the Schiff-base intermediate with substrate; via pyruvic acid; for decarboxylase activity. S226 bears the Pyruvic acid (Ser); by autocatalysis mark.

Belongs to the phosphatidylserine decarboxylase family. PSD-B subfamily. Prokaryotic type I sub-subfamily. In terms of assembly, heterodimer of a large membrane-associated beta subunit and a small pyruvoyl-containing alpha subunit. Requires pyruvate as cofactor. Post-translationally, is synthesized initially as an inactive proenzyme. Formation of the active enzyme involves a self-maturation process in which the active site pyruvoyl group is generated from an internal serine residue via an autocatalytic post-translational modification. Two non-identical subunits are generated from the proenzyme in this reaction, and the pyruvate is formed at the N-terminus of the alpha chain, which is derived from the carboxyl end of the proenzyme. The autoendoproteolytic cleavage occurs by a canonical serine protease mechanism, in which the side chain hydroxyl group of the serine supplies its oxygen atom to form the C-terminus of the beta chain, while the remainder of the serine residue undergoes an oxidative deamination to produce ammonia and the pyruvoyl prosthetic group on the alpha chain. During this reaction, the Ser that is part of the protease active site of the proenzyme becomes the pyruvoyl prosthetic group, which constitutes an essential element of the active site of the mature decarboxylase.

It is found in the cell membrane. It carries out the reaction a 1,2-diacyl-sn-glycero-3-phospho-L-serine + H(+) = a 1,2-diacyl-sn-glycero-3-phosphoethanolamine + CO2. The protein operates within phospholipid metabolism; phosphatidylethanolamine biosynthesis; phosphatidylethanolamine from CDP-diacylglycerol: step 2/2. Catalyzes the formation of phosphatidylethanolamine (PtdEtn) from phosphatidylserine (PtdSer). The protein is Phosphatidylserine decarboxylase proenzyme of Bacillus anthracis.